Consider the following 206-residue polypeptide: Cytochrome c oxidase assembly protein CtaG (206 aa).

At 1–12 (MSKKPAGKNSNR) the chain is on the cytoplasmic side. A helical; Signal-anchor for type II membrane protein membrane pass occupies residues 13–35 (IVAAVCLAFFTGMIGMAYAAVPL). The Periplasmic segment spans residues 36 to 206 (YKMFCQATGY…ISDTEANLGG (171 aa)). The interval 184–206 (VASSEPVQGTSKIISDTEANLGG) is disordered. Residues 188–206 (EPVQGTSKIISDTEANLGG) are compositionally biased toward polar residues.

It belongs to the COX11/CtaG family.

It localises to the cell inner membrane. Functionally, exerts its effect at some terminal stage of cytochrome c oxidase synthesis, probably by being involved in the insertion of the copper B into subunit I. In Mesorhizobium japonicum (strain LMG 29417 / CECT 9101 / MAFF 303099) (Mesorhizobium loti (strain MAFF 303099)), this protein is Cytochrome c oxidase assembly protein CtaG.